Consider the following 511-residue polypeptide: Protein phosphatase 2C 7 (511 aa).

Residues 1-19 (MEEISPAVALTLGLANTMC) form the signal peptide. Residues 188-501 (LWGTISICGG…DNISIIVIDL (314 aa)) form the PPM-type phosphatase domain. The Mn(2+) site is built by aspartate 242, glycine 243, aspartate 432, and aspartate 492.

The protein belongs to the PP2C family. As to quaternary structure, interacts with PYL13. Mg(2+) is required as a cofactor. Mn(2+) serves as cofactor. In terms of tissue distribution, expressed in seeds.

It carries out the reaction O-phospho-L-seryl-[protein] + H2O = L-seryl-[protein] + phosphate. The catalysed reaction is O-phospho-L-threonyl-[protein] + H2O = L-threonyl-[protein] + phosphate. Key component and repressor of the abscisic acid (ABA) signaling pathway that regulates numerous ABA responses, such as stomatal closure, seed germination and inhibition of vegetative growth. This Arabidopsis thaliana (Mouse-ear cress) protein is Protein phosphatase 2C 7 (HAB2).